The chain runs to 464 residues: MAMTAGATTTFPMSNHTRERVTVAKLTLENFYSNLILQHEERETRQKKLEVAMEEEGLADEEKKLRRSQHARKETEFLRLKRTRLGLDDFESLKVIGRGAFGEVRLVQKKDTGHIYAMKILRKADMLEKEQVAHIRAERDILVEADGAWVVKMFYSFQDKRNLYLIMEFLPGGDMMTLLMKKDTLTEEETQFYISETVLAIDAIHQLGFIHRDVKPDNLLLDAKGHVKLSDFGLCTGLKKAHRTEFYRNLTHNPPSDFSFQNMNSKRKAETWKKNRRQLAYSTVGTPDYIAPEVFMQTGYNKLCDWWSLGVIMYEMLIGFPPFCSETPQETYRKVMSWKETLAFPPEVPVSEKAKDLILRFCTDSENRIGNGGVEEIKGHPFFEGVDWGHIRERPAAIPIEIRSIDDTSNFDDFPESDILQPVPNTTEPDYKSKDWVFLNYTYKRFEGLTQRGSIPTYMKAGKL.

A2 is subject to N-acetylalanine. An S100B binding region spans residues 64–89; it reads KLRRSQHARKETEFLRLKRTRLGLDD. Phosphothreonine is present on T75. Residues 90–383 enclose the Protein kinase domain; sequence FESLKVIGRG…VEEIKGHPFF (294 aa). ATP contacts are provided by residues 96–104 and K119; that span reads IGRGAFGEV. The active-site Proton acceptor is the D213. S282 is subject to Phosphoserine; by autocatalysis. One can recognise an AGC-kinase C-terminal domain in the interval 384–453; it reads EGVDWGHIRE…KRFEGLTQRG (70 aa). A Phosphothreonine; by STK24/MST3 modification is found at T442.

The protein belongs to the protein kinase superfamily. AGC Ser/Thr protein kinase family. Homodimeric S100B binds two molecules of STK38L. Interacts with MOB1 and MOB2. Interacts with MICAL1; leading to inhibit the protein kinase activity by antagonizing activation by MST1/STK4. Mg(2+) is required as a cofactor. In terms of tissue distribution, highly expressed in the large and small intestine, stomach and testis. High levels also present in the brain, in particular the neurocortex, basal forebrain, hippocampus, the amygdala, cerebellum and brainstem.

The protein localises to the cytoplasm. It localises to the cytoskeleton. The protein resides in the membrane. It catalyses the reaction L-seryl-[protein] + ATP = O-phospho-L-seryl-[protein] + ADP + H(+). It carries out the reaction L-threonyl-[protein] + ATP = O-phospho-L-threonyl-[protein] + ADP + H(+). With respect to regulation, activated by binding of S100B which releases autoinhibitory N-lobe interactions, enabling ATP to bind and the autophosphorylation of Ser-282. Thr-442 then undergoes calcium-dependent phosphorylation by STK24/MST3. Interactions between phosphorylated Thr-442 and the N-lobe promote additional structural changes that complete the activation of the kinase. Autoinhibition is also released by the binding of MOB1/MOBKL1A and MOB2 to the N-terminal of STK38L. Functionally, involved in the regulation of structural processes in differentiating and mature neuronal cells. The protein is Serine/threonine-protein kinase 38-like of Mus musculus (Mouse).